Consider the following 365-residue polypeptide: Flagellar P-ring protein (365 aa).

Residues 1–19 (MIKFLSALILLLVTTAAQA) form the signal peptide.

The protein belongs to the FlgI family. As to quaternary structure, the basal body constitutes a major portion of the flagellar organelle and consists of four rings (L,P,S, and M) mounted on a central rod.

Its subcellular location is the periplasm. The protein localises to the bacterial flagellum basal body. Assembles around the rod to form the L-ring and probably protects the motor/basal body from shearing forces during rotation. This is Flagellar P-ring protein from Shigella boydii serotype 4 (strain Sb227).